Reading from the N-terminus, the 361-residue chain is Putative agmatine deiminase (361 aa).

Residue C354 is the Amidino-cysteine intermediate of the active site.

It belongs to the agmatine deiminase family.

It carries out the reaction agmatine + H2O = N-carbamoylputrescine + NH4(+). This Streptococcus pneumoniae (strain Hungary19A-6) protein is Putative agmatine deiminase.